Reading from the N-terminus, the 862-residue chain is C-type lectin domain-containing protein 161 (862 aa).

The N-terminal stretch at Met-1–Ala-20 is a signal peptide. N-linked (GlcNAc...) asparagine glycans are attached at residues Asn-22 and Asn-91. The C-type lectin 1 domain occupies Ser-41 to Thr-154. Cys-62 and Cys-153 are joined by a disulfide. The tract at residues Ala-162 to Asp-291 is disordered. A compositionally biased stretch (basic and acidic residues) spans Ser-198–Glu-218. A glycan (N-linked (GlcNAc...) asparagine) is linked at Asn-222. A compositionally biased stretch (basic and acidic residues) spans Ser-242–Glu-252. 3 N-linked (GlcNAc...) asparagine glycosylation sites follow: Asn-258, Asn-279, and Asn-352. The span at Ala-265 to Asp-283 shows a compositional bias: low complexity. 3 disordered regions span residues Met-377–Leu-437, Ala-450–Ala-469, and Ala-474–Ser-504. Residues Ser-388–Lys-418 are compositionally biased toward low complexity. Composition is skewed to basic and acidic residues over residues Ser-455 to Lys-467 and Glu-478 to Ser-491. A glycan (N-linked (GlcNAc...) asparagine) is linked at Asn-559. 2 consecutive C-type lectin domains span residues Ala-562 to Cys-687 and Lys-716 to Val-828. Cys-653 and Cys-678 are oxidised to a cystine. An N-linked (GlcNAc...) asparagine glycan is attached at Asn-765. A disulfide bond links Cys-807 and Cys-819. N-linked (GlcNAc...) asparagine glycosylation is found at Asn-831 and Asn-857.

It is found in the secreted. This Caenorhabditis elegans protein is C-type lectin domain-containing protein 161 (clec-161).